The chain runs to 248 residues: Isopentenyl phosphate kinase (248 aa).

Lys7–Ser11 contacts ATP. A substrate-binding site is contributed by Gly49. ATP is bound at residue Gly50. 2 residues coordinate substrate: His54 and Gly152. ATP contacts are provided by Gly209 and Lys213.

The protein belongs to the isopentenyl phosphate kinase family. As to quaternary structure, homodimer.

It carries out the reaction isopentenyl phosphate + ATP = isopentenyl diphosphate + ADP. Its function is as follows. Catalyzes the phosphorylation of isopentenyl phosphate (IP) to isopentenyl diphosphate (IPP). Functions in an alternate mevalonate (MVA) pathway leading to IPP, a key precursor for the biosynthesis of isoprenoid compounds such as archaeal membrane lipids. This is Isopentenyl phosphate kinase from Haloferax volcanii (strain ATCC 29605 / DSM 3757 / JCM 8879 / NBRC 14742 / NCIMB 2012 / VKM B-1768 / DS2) (Halobacterium volcanii).